We begin with the raw amino-acid sequence, 360 residues long: DNA replication and repair protein RecF (360 aa).

30 to 37 serves as a coordination point for ATP; that stretch reads GHNGSGKT.

It belongs to the RecF family.

Its subcellular location is the cytoplasm. Its function is as follows. The RecF protein is involved in DNA metabolism; it is required for DNA replication and normal SOS inducibility. RecF binds preferentially to single-stranded, linear DNA. It also seems to bind ATP. In Shewanella pealeana (strain ATCC 700345 / ANG-SQ1), this protein is DNA replication and repair protein RecF.